Consider the following 389-residue polypeptide: Pyruvylated Gal-beta-1,3-epitope synthesis protein 2 (389 aa).

The Cytoplasmic segment spans residues 1-16; sequence MTKLWVNFFSQKLLRL. Residues 17-37 form a helical membrane-spanning segment; it reads LIPSIIVVFAFAALFAIYSPI. Residues 38-389 are Lumenal-facing; sequence QLGGINFYKR…WSNSFDLITA (352 aa).

Its subcellular location is the endoplasmic reticulum membrane. It localises to the golgi apparatus membrane. In terms of biological role, involved in cell wall biogenesis. Has a role in the addition of Gal-beta1,3 moeities to galactomannans and their subsequent pyruvylation. Has a role in meiosis. The protein is Pyruvylated Gal-beta-1,3-epitope synthesis protein 2 (pvg2) of Schizosaccharomyces pombe (strain 972 / ATCC 24843) (Fission yeast).